Here is a 132-residue protein sequence, read N- to C-terminus: MSKTLNIIWQYLRAFVLIYACLYAGIFIASLLPVTIPGSIIGMLILSVLLALQILPAKWVNPGCYVLIRYMALLFVPIGVGVMQYFDLLRAQFGPVVVSCAVSTLVVFLVVSWSSQLVHGERKVVGQKGSEE.

The next 4 helical transmembrane spans lie at leucine 5–glycine 25, isoleucine 26–leucine 46, glycine 63–methionine 83, and phenylalanine 93–tryptophan 113.

The protein belongs to the UPF0299 family.

It localises to the cell inner membrane. The protein is UPF0299 membrane protein YohJ of Shigella flexneri serotype 5b (strain 8401).